Reading from the N-terminus, the 384-residue chain is Probable L-tyrosine/L-aspartate decarboxylase (384 aa).

The residue at position 233 (Lys233) is an N6-(pyridoxal phosphate)lysine.

It belongs to the group II decarboxylase family. MfnA subfamily. Pyridoxal 5'-phosphate serves as cofactor.

It carries out the reaction L-tyrosine + H(+) = tyramine + CO2. It catalyses the reaction L-aspartate + H(+) = beta-alanine + CO2. It participates in cofactor biosynthesis; methanofuran biosynthesis. It functions in the pathway cofactor biosynthesis; coenzyme A biosynthesis. Functionally, catalyzes the decarboxylation of L-tyrosine to produce tyramine for methanofuran biosynthesis. Can also catalyze the decarboxylation of L-aspartate to produce beta-alanine for coenzyme A (CoA) biosynthesis. This chain is Probable L-tyrosine/L-aspartate decarboxylase, found in Methanococcus maripaludis (strain C5 / ATCC BAA-1333).